The primary structure comprises 336 residues: Holliday junction branch migration complex subunit RuvB (336 aa).

Residues 1–182 (MKERIVNLET…FGMSFRMQFY (182 aa)) form a large ATPase domain (RuvB-L) region. ATP is bound by residues L21, R22, G63, K66, T67, S68, 129 to 131 (EDF), R172, Y182, and R219. T67 is a binding site for Mg(2+). Positions 183-253 (SPSELALIIK…ITLHALNELG (71 aa)) are small ATPAse domain (RuvB-S). Residues 256 to 336 (ELGFDEADLA…IPTLNPQTLF (81 aa)) form a head domain (RuvB-H) region. Positions 310 and 315 each coordinate DNA.

This sequence belongs to the RuvB family. In terms of assembly, homohexamer. Forms an RuvA(8)-RuvB(12)-Holliday junction (HJ) complex. HJ DNA is sandwiched between 2 RuvA tetramers; dsDNA enters through RuvA and exits via RuvB. An RuvB hexamer assembles on each DNA strand where it exits the tetramer. Each RuvB hexamer is contacted by two RuvA subunits (via domain III) on 2 adjacent RuvB subunits; this complex drives branch migration. In the full resolvosome a probable DNA-RuvA(4)-RuvB(12)-RuvC(2) complex forms which resolves the HJ.

It is found in the cytoplasm. It carries out the reaction ATP + H2O = ADP + phosphate + H(+). Its function is as follows. The RuvA-RuvB-RuvC complex processes Holliday junction (HJ) DNA during genetic recombination and DNA repair, while the RuvA-RuvB complex plays an important role in the rescue of blocked DNA replication forks via replication fork reversal (RFR). RuvA specifically binds to HJ cruciform DNA, conferring on it an open structure. The RuvB hexamer acts as an ATP-dependent pump, pulling dsDNA into and through the RuvAB complex. RuvB forms 2 homohexamers on either side of HJ DNA bound by 1 or 2 RuvA tetramers; 4 subunits per hexamer contact DNA at a time. Coordinated motions by a converter formed by DNA-disengaged RuvB subunits stimulates ATP hydrolysis and nucleotide exchange. Immobilization of the converter enables RuvB to convert the ATP-contained energy into a lever motion, pulling 2 nucleotides of DNA out of the RuvA tetramer per ATP hydrolyzed, thus driving DNA branch migration. The RuvB motors rotate together with the DNA substrate, which together with the progressing nucleotide cycle form the mechanistic basis for DNA recombination by continuous HJ branch migration. Branch migration allows RuvC to scan DNA until it finds its consensus sequence, where it cleaves and resolves cruciform DNA. This is Holliday junction branch migration complex subunit RuvB from Helicobacter pylori (strain Shi470).